The primary structure comprises 463 residues: Cysteine--tRNA ligase (463 aa).

Cys-29 is a Zn(2+) binding site. A 'HIGH' region motif is present at residues Ala-31–His-41. Residues Cys-212, His-237, and Glu-241 each coordinate Zn(2+). Residues Lys-268–Ser-272 carry the 'KMSKS' region motif. Position 271 (Lys-271) interacts with ATP.

This sequence belongs to the class-I aminoacyl-tRNA synthetase family. In terms of assembly, monomer. The cofactor is Zn(2+).

Its subcellular location is the cytoplasm. It catalyses the reaction tRNA(Cys) + L-cysteine + ATP = L-cysteinyl-tRNA(Cys) + AMP + diphosphate. This chain is Cysteine--tRNA ligase, found in Corynebacterium diphtheriae (strain ATCC 700971 / NCTC 13129 / Biotype gravis).